Consider the following 587-residue polypeptide: MNDSVLVAPSLSTAQTEDTFEFQSYGETEHSRSYLGSDVTKDNLVELVSAYYSVPELIQYFEEHPQYKKITLQFPDELVLDSSIVVQLMQQELVKAEDETSQSFNTIDTDEVLHNEKSCGNCSGCDCSSKIDKTETKRKVWILADTSYSSCCVDEVASEHVKGDIVVHFGDACMNAVQKLPVVYSLGRPVLDLDLVVSQFKLKYAAKDQKICLMADAPHSMHMKSIYDILHDKEGYKNVVYSDINQDMLQSDTHIVGYNNAVEHDERLRKCVTCGNRNIYAEVDVSELNEYDLFHVTIPKDPHLLYLTTKFQSVTLYDPSSGMLNEGPFPSMMKRYKFMHMARTAGTIGILVNTLSLRNTKETMNKLTKLLKENGKKHYLFVVGKPNVAKLANFEPIDIWCILGCGQGGIVLDQYNEFYKPIITPYELLMALSDEVTWTGQWITDFKSIINQIENEVNDSDDMEQDILSSGTECRSDEDEAPEFNAVTGKYVSTSRPLRQIARLEIETPVEEVRASDSTELVKQFSQTVAIRNTVSTSAAFLQTRHWTGLGSDYKDDEDGEEDGATVEEGTAGVARSYQFDELNKKT.

Positions 152, 173, and 405 each coordinate [4Fe-4S] cluster. The interval glycine 549–threonine 587 is disordered. Acidic residues predominate over residues lysine 555–threonine 566.

It belongs to the DPH1/DPH2 family. DPH2 subfamily. In terms of assembly, component of the 2-(3-amino-3-carboxypropyl)histidine synthase complex composed of DPH1, DPH2, DPH3 and a NADH-dependent reductase, predominantly CBR1. It depends on [4Fe-4S] cluster as a cofactor.

The protein resides in the cytoplasm. It functions in the pathway protein modification; peptidyl-diphthamide biosynthesis. Functionally, required for the first step of diphthamide biosynthesis, a post-translational modification of histidine which occurs in elongation factor 2. DPH1 and DPH2 transfer a 3-amino-3-carboxypropyl (ACP) group from S-adenosyl-L-methionine (SAM) to a histidine residue, the reaction is assisted by a reduction system comprising DPH3 and a NADH-dependent reductase, predominantly CBR1. Facilitates the reduction of the catalytic iron-sulfur cluster found in the DPH1 subunit. The chain is 2-(3-amino-3-carboxypropyl)histidine synthase subunit 2 (DPH2) from Kluyveromyces lactis (strain ATCC 8585 / CBS 2359 / DSM 70799 / NBRC 1267 / NRRL Y-1140 / WM37) (Yeast).